The sequence spans 304 residues: Recombination-associated protein RdgC (304 aa).

The protein belongs to the RdgC family.

It is found in the cytoplasm. The protein localises to the nucleoid. Its function is as follows. May be involved in recombination. The polypeptide is Recombination-associated protein RdgC (Shewanella putrefaciens (strain CN-32 / ATCC BAA-453)).